We begin with the raw amino-acid sequence, 284 residues long: Shikimate dehydrogenase (NADP(+)) (284 aa).

Shikimate contacts are provided by residues 20 to 22 (SIS) and serine 67. The active-site Proton acceptor is lysine 71. Aspartate 83 is a binding site for NADP(+). Shikimate contacts are provided by asparagine 92 and aspartate 107. NADP(+) contacts are provided by residues 129 to 133 (GAGGA) and isoleucine 227. Tyrosine 229 serves as a coordination point for shikimate. Residue glycine 250 coordinates NADP(+).

It belongs to the shikimate dehydrogenase family. In terms of assembly, homodimer.

It catalyses the reaction shikimate + NADP(+) = 3-dehydroshikimate + NADPH + H(+). It participates in metabolic intermediate biosynthesis; chorismate biosynthesis; chorismate from D-erythrose 4-phosphate and phosphoenolpyruvate: step 4/7. Functionally, involved in the biosynthesis of the chorismate, which leads to the biosynthesis of aromatic amino acids. Catalyzes the reversible NADPH linked reduction of 3-dehydroshikimate (DHSA) to yield shikimate (SA). The polypeptide is Shikimate dehydrogenase (NADP(+)) (Streptococcus pneumoniae serotype 2 (strain D39 / NCTC 7466)).